The primary structure comprises 179 residues: Large ribosomal subunit protein uL5 (179 aa).

The protein belongs to the universal ribosomal protein uL5 family. As to quaternary structure, part of the 50S ribosomal subunit; part of the 5S rRNA/L5/L18/L25 subcomplex. Contacts the 5S rRNA and the P site tRNA. Forms a bridge to the 30S subunit in the 70S ribosome.

Functionally, this is one of the proteins that bind and probably mediate the attachment of the 5S RNA into the large ribosomal subunit, where it forms part of the central protuberance. In the 70S ribosome it contacts protein S13 of the 30S subunit (bridge B1b), connecting the 2 subunits; this bridge is implicated in subunit movement. Contacts the P site tRNA; the 5S rRNA and some of its associated proteins might help stabilize positioning of ribosome-bound tRNAs. The sequence is that of Large ribosomal subunit protein uL5 from Enterococcus faecalis (strain ATCC 700802 / V583).